A 377-amino-acid polypeptide reads, in one-letter code: Succinyl-diaminopimelate desuccinylase (377 aa).

Zn(2+) is bound at residue H66. The active site involves D68. D99 serves as a coordination point for Zn(2+). Residue E133 is the Proton acceptor of the active site. Zn(2+) contacts are provided by E134, E162, and H348.

This sequence belongs to the peptidase M20A family. DapE subfamily. Homodimer. Zn(2+) is required as a cofactor. Requires Co(2+) as cofactor.

It carries out the reaction N-succinyl-(2S,6S)-2,6-diaminopimelate + H2O = (2S,6S)-2,6-diaminopimelate + succinate. It functions in the pathway amino-acid biosynthesis; L-lysine biosynthesis via DAP pathway; LL-2,6-diaminopimelate from (S)-tetrahydrodipicolinate (succinylase route): step 3/3. Its function is as follows. Catalyzes the hydrolysis of N-succinyl-L,L-diaminopimelic acid (SDAP), forming succinate and LL-2,6-diaminopimelate (DAP), an intermediate involved in the bacterial biosynthesis of lysine and meso-diaminopimelic acid, an essential component of bacterial cell walls. The protein is Succinyl-diaminopimelate desuccinylase of Xylella fastidiosa (strain M12).